A 109-amino-acid polypeptide reads, in one-letter code: Thiosulfate sulfurtransferase GlpE (109 aa).

One can recognise a Rhodanese domain in the interval R16–E104. C64 serves as the catalytic Cysteine persulfide intermediate.

It belongs to the GlpE family.

The protein resides in the cytoplasm. It catalyses the reaction thiosulfate + hydrogen cyanide = thiocyanate + sulfite + 2 H(+). The enzyme catalyses thiosulfate + [thioredoxin]-dithiol = [thioredoxin]-disulfide + hydrogen sulfide + sulfite + 2 H(+). Functionally, transferase that catalyzes the transfer of sulfur from thiosulfate to thiophilic acceptors such as cyanide or dithiols. May function in a CysM-independent thiosulfate assimilation pathway by catalyzing the conversion of thiosulfate to sulfite, which can then be used for L-cysteine biosynthesis. The sequence is that of Thiosulfate sulfurtransferase GlpE from Stutzerimonas stutzeri (strain A1501) (Pseudomonas stutzeri).